Reading from the N-terminus, the 492-residue chain is Probable small intestine urate exporter (492 aa).

Positions 1–20 are disordered; that stretch reads MSTGADLKAREGDIPSDNMT. Asn18, Asn44, Asn53, Asn63, Asn72, and Asn87 each carry an N-linked (GlcNAc...) asparagine glycan. A run of 11 helical transmembrane segments spans residues 112 to 132, 134 to 154, 156 to 176, 198 to 218, 225 to 245, 287 to 307, 327 to 347, 363 to 383, 393 to 413, 426 to 446, and 456 to 476; these read LSYG…VFGA, YVVG…PLAA, AGVA…VMVL, IAAS…GLIC, YIFY…FPLV, LPLW…STVM, ILSA…GLLA, KLFT…LPWV, FLVL…INFL, LLQV…GFFI, and NVFF…LIFS.

It belongs to the major facilitator superfamily. Sodium/anion cotransporter family. As to expression, expressed in the small intestine (at protein level).

The protein localises to the apical cell membrane. It catalyses the reaction 3 Na(+)(out) + phosphate(out) = 3 Na(+)(in) + phosphate(in). It carries out the reaction urate(out) + n chloride(in) = urate(in) + n chloride(out). The catalysed reaction is L-thyroxine(out) = L-thyroxine(in). The enzyme catalyses 3,3',5-triiodo-L-thyronine(out) = 3,3',5-triiodo-L-thyronine(in). Acts as a membrane potential-dependent organic anion transporter, the transport requires a low concentration of chloride ions. Mediates chloride-dependent transport of urate. Mediates sodium-independent high affinity transport of thyroid hormones including L-thyroxine (T4) and 3,3',5-triiodo-L-thyronine (T3). Can actively transport inorganic phosphate into cells via Na(+) cotransport. The chain is Probable small intestine urate exporter (Slc17a4) from Mus musculus (Mouse).